Consider the following 362-residue polypeptide: Protein-glutamate methylesterase/protein-glutamine glutaminase 1 (362 aa).

The Response regulatory domain maps to 10 to 127 (RVLVVDDSSF…ADAQRVFREE (118 aa)). Aspartate 61 is subject to 4-aspartylphosphate. The region spanning 163–357 (PRPSQALAGK…LPLTQIGSEI (195 aa)) is the CheB-type methylesterase domain. Residues serine 181, histidine 208, and aspartate 306 contribute to the active site.

Belongs to the CheB family. Phosphorylated by CheA. Phosphorylation of the N-terminal regulatory domain activates the methylesterase activity.

Its subcellular location is the cytoplasm. The catalysed reaction is [protein]-L-glutamate 5-O-methyl ester + H2O = L-glutamyl-[protein] + methanol + H(+). It catalyses the reaction L-glutaminyl-[protein] + H2O = L-glutamyl-[protein] + NH4(+). Functionally, involved in chemotaxis. Part of a chemotaxis signal transduction system that modulates chemotaxis in response to various stimuli. Catalyzes the demethylation of specific methylglutamate residues introduced into the chemoreceptors (methyl-accepting chemotaxis proteins or MCP) by CheR. Also mediates the irreversible deamidation of specific glutamine residues to glutamic acid. This is Protein-glutamate methylesterase/protein-glutamine glutaminase 1 from Geobacter sulfurreducens (strain ATCC 51573 / DSM 12127 / PCA).